Here is a 250-residue protein sequence, read N- to C-terminus: Proteasome subunit alpha type-8 (250 aa).

The protein belongs to the peptidase T1A family. As to quaternary structure, component of the outer alpha-ring of the 20S proteasome core which is composed of 28 subunits that are arranged in four stacked rings, resulting in a barrel-shaped structure. The catalytic chamber with the active sites is on the inside of the barrel. Interacts with canonical subunits of the spermatoproteasome, including proteasome activators PSME4 (also called PA200) and PSME3 (also called PA28-gamma). Interacts with proteasome-interacting proteins chaperones including CCT6B and CCT2, ubiquitin ligases (TRIP12, NEDD4, TRIM36 and RAD18), and ubiquitin specific proteases such as USP9X, USP34, USP5 and USP47. Interacts with meiotic proteins cyclin dependent kinase CDK1 and the ATPase TRIP13 as well as proteins of the synaptonemal complex SIX6OS1 and SYCE3.

Its subcellular location is the nucleus. Component of the spermatoproteasome, a proteasome specifically found in testis that promotes acetylation-dependent degradation of histones, thereby participating actively to the exchange of histones during spermatogenesis. The proteasome is a protein complex that degrades unneeded or damaged proteins by proteolysis, a chemical reaction that breaks peptide bonds. Required for 20S core proteasome assembly, essential for the degradation of meiotic proteins RAD51 and RPA1 at late prophase I and the progression of meiosis I during spermatogenesis. Localizes to the synaptonemal complex, a 'zipper'-like structure that holds homologous chromosome pairs in synapsis during meiotic prophase I. The protein is Proteasome subunit alpha type-8 of Mus musculus (Mouse).